Here is a 2193-residue protein sequence, read N- to C-terminus: Genome polyprotein (2193 aa).

G2 carries the N-myristoyl glycine; by host lipid modification. Topologically, residues G2–Q1503 are cytoplasmic. An amphipathic alpha-helix region spans residues E567–V583. Residues H880 and D898 each act as for protease 2A activity in the active site. Zn(2+) contacts are provided by C915 and C917. The active-site For protease 2A activity is C969. 2 residues coordinate Zn(2+): C975 and H977. Residues N1109 to Q1181 are membrane-binding. An oligomerization region spans residues N1109–T1247. The tract at residues A1130–Q1134 is RNA-binding. The 157-residue stretch at E1213–N1369 folds into the SF3 helicase domain. Zn(2+) contacts are provided by C1377, C1389, and C1394. The C4-type; degenerate zinc-finger motif lies at C1377–C1394. The interval E1421–V1428 is RNA-binding. The interval L1432 to Q1437 is oligomerization. An intramembrane segment occupies A1504 to Y1519. Residues K1520–F2193 lie on the Cytoplasmic side of the membrane. Y1529 is modified (O-(5'-phospho-RNA)-tyrosine). In terms of domain architecture, Peptidase C3 spans G1549–F1727. Active-site for protease 3C activity residues include H1588, E1619, and C1695. One can recognise a RdRp catalytic domain in the interval G1958 to L2074. The Mg(2+) site is built by D1964 and D2060.

The protein belongs to the picornaviruses polyprotein family. Interacts with capsid protein VP1 and capsid protein VP3 to form heterotrimeric protomers. In terms of assembly, interacts with capsid protein VP0, and capsid protein VP3 to form heterotrimeric protomers. Five protomers subsequently associate to form pentamers which serve as building blocks for the capsid. Interacts with capsid protein VP2, capsid protein VP3 and capsid protein VP4 following cleavage of capsid protein VP0. As to quaternary structure, interacts with capsid protein VP1 and capsid protein VP3 in the mature capsid. Interacts with capsid protein VP0 and capsid protein VP1 to form heterotrimeric protomers. Five protomers subsequently associate to form pentamers which serve as building blocks for the capsid. Interacts with capsid protein VP4 in the mature capsid. Interacts with protein 2C; this interaction may be important for virion morphogenesis. In terms of assembly, interacts with capsid protein VP1 and capsid protein VP3. As to quaternary structure, homodimer. Homohexamer; forms a hexameric ring structure with 6-fold symmetry characteristic of AAA+ ATPases. Interacts (via N-terminus) with host RTN3 (via reticulon domain); this interaction is important for viral replication. Interacts with capsid protein VP3; this interaction may be important for virion morphogenesis. In terms of assembly, interacts with protein 3CD. As to quaternary structure, homodimer. Interacts with host GBF1. Interacts (via GOLD domain) with host ACBD3 (via GOLD domain); this interaction allows the formation of a viral protein 3A/ACBD3 heterotetramer with a 2:2 stoichiometry, which will stimulate the recruitment of host PI4KB in order to synthesize PI4P at the viral RNA replication sites. Interacts with RNA-directed RNA polymerase. In terms of assembly, interacts with protein 3AB and with RNA-directed RNA polymerase. As to quaternary structure, interacts with Viral protein genome-linked and with protein 3CD. Mg(2+) serves as cofactor. Post-translationally, specific enzymatic cleavages in vivo by the viral proteases yield processing intermediates and the mature proteins. In terms of processing, myristoylation is required for the formation of pentamers during virus assembly. Further assembly of 12 pentamers and a molecule of genomic RNA generates the provirion. During virion maturation, immature virions are rendered infectious following cleavage of VP0 into VP4 and VP2. This maturation seems to be an autocatalytic event triggered by the presence of RNA in the capsid and it is followed by a conformational change infectious virion. Post-translationally, myristoylation is required during RNA encapsidation and formation of the mature virus particle. In terms of processing, VPg is uridylylated by the polymerase into VPg-pUpU. This acts as a nucleotide-peptide primer for the genomic RNA replication.

It is found in the virion. Its subcellular location is the host cytoplasm. It localises to the host cytoplasmic vesicle membrane. The protein resides in the host nucleus. It catalyses the reaction a ribonucleoside 5'-triphosphate + H2O = a ribonucleoside 5'-diphosphate + phosphate + H(+). It carries out the reaction Selective cleavage of Tyr-|-Gly bond in the picornavirus polyprotein.. The enzyme catalyses RNA(n) + a ribonucleoside 5'-triphosphate = RNA(n+1) + diphosphate. The catalysed reaction is Selective cleavage of Gln-|-Gly bond in the poliovirus polyprotein. In other picornavirus reactions Glu may be substituted for Gln, and Ser or Thr for Gly.. Replication or transcription is subject to high level of random mutations by the nucleotide analog ribavirin. In terms of biological role, forms an icosahedral capsid of pseudo T=3 symmetry with capsid proteins VP2 and VP3. The capsid is 300 Angstroms in diameter, composed of 60 copies of each capsid protein and enclosing the viral positive strand RNA genome. Capsid protein VP1 mainly forms the vertices of the capsid. Capsid protein VP1 interacts with host cell receptor to provide virion attachment to target host cells. This attachment induces virion internalization. Tyrosine kinases are probably involved in the entry process. After binding to its receptor, the capsid undergoes conformational changes. Capsid protein VP1 N-terminus (that contains an amphipathic alpha-helix) and capsid protein VP4 are externalized. Together, they shape a pore in the host membrane through which viral genome is translocated to host cell cytoplasm. Functionally, forms an icosahedral capsid of pseudo T=3 symmetry with capsid proteins VP2 and VP3. The capsid is 300 Angstroms in diameter, composed of 60 copies of each capsid protein and enclosing the viral positive strand RNA genome. Lies on the inner surface of the capsid shell. After binding to the host receptor, the capsid undergoes conformational changes. Capsid protein VP4 is released, Capsid protein VP1 N-terminus is externalized, and together, they shape a pore in the host membrane through which the viral genome is translocated into the host cell cytoplasm. Its function is as follows. Component of immature procapsids, which is cleaved into capsid proteins VP4 and VP2 after maturation. Allows the capsid to remain inactive before the maturation step. In terms of biological role, cysteine protease that cleaves viral polyprotein and specific host proteins. It is responsible for the autocatalytic cleavage between the P1 and P2 regions, which is the first cleavage occurring in the polyprotein. Also cleaves the host translation initiation factor EIF4G1, in order to shut down the capped cellular mRNA translation. Inhibits the host nucleus-cytoplasm protein and RNA trafficking by cleaving host members of the nuclear pores. Counteracts stress granule formation probably by antagonizing its assembly or promoting its dissassembly. Functionally, plays an essential role in the virus replication cycle by acting as a viroporin. Creates a pore in the host endoplasmic reticulum and as a consequence releases Ca2+ in the cytoplasm of infected cell. In turn, high levels of cytoplasmic calcium may trigger membrane trafficking and transport of viral ER-associated proteins to viroplasms, sites of viral genome replication. Induces and associates with structural rearrangements of intracellular membranes. Displays RNA-binding, nucleotide binding and NTPase activities. May play a role in virion morphogenesis and viral RNA encapsidation by interacting with the capsid protein VP3. Its function is as follows. Localizes the viral replication complex to the surface of membranous vesicles. Together with protein 3CD binds the Cis-Active RNA Element (CRE) which is involved in RNA synthesis initiation. Acts as a cofactor to stimulate the activity of 3D polymerase, maybe through a nucleid acid chaperone activity. In terms of biological role, localizes the viral replication complex to the surface of membranous vesicles. It inhibits host cell endoplasmic reticulum-to-Golgi apparatus transport and causes the disassembly of the Golgi complex, possibly through GBF1 interaction. This would result in depletion of MHC, trail receptors and IFN receptors at the host cell surface. Plays an essential role in viral RNA replication by recruiting ACBD3 and PI4KB at the viral replication sites, thereby allowing the formation of the rearranged membranous structures where viral replication takes place. Functionally, acts as a primer for viral RNA replication and remains covalently bound to viral genomic RNA. VPg is uridylylated prior to priming replication into VPg-pUpU. The oriI viral genomic sequence may act as a template for this. The VPg-pUpU is then used as primer on the genomic RNA poly(A) by the RNA-dependent RNA polymerase to replicate the viral genome. During genome replication, the VPg-RNA linkage is removed by the host TDP2, thereby accelerating replication. During the late stage of the replication cycle, host TDP2 is excluded from sites of viral RNA synthesis and encapsidation, allowing for the generation of progeny virions. Involved in the viral replication complex and viral polypeptide maturation. It exhibits protease activity with a specificity and catalytic efficiency that is different from protease 3C. Protein 3CD lacks polymerase activity. Protein 3CD binds to the 5'UTR of the viral genome. Its function is as follows. Replicates the viral genomic RNA on the surface of intracellular membranes. May form linear arrays of subunits that propagate along a strong head-to-tail interaction called interface-I. Covalently attaches UMP to a tyrosine of VPg, which is used to prime RNA synthesis. The positive stranded RNA genome is first replicated at virus induced membranous vesicles, creating a dsRNA genomic replication form. This dsRNA is then used as template to synthesize positive stranded RNA genomes. ss(+)RNA genomes are either translated, replicated or encapsidated. In terms of biological role, major viral protease that mediates proteolytic processing of the polyprotein. Cleaves host EIF5B, contributing to host translation shutoff. Also cleaves host PABPC1, contributing to host translation shutoff. Cleaves host NLRP1, triggers host N-glycine-mediated degradation of the autoinhibitory NLRP1 N-terminal fragment. The polypeptide is Genome polyprotein (Echovirus 9 (strain Hill)).